A 413-amino-acid chain; its full sequence is Aspartate aminotransferase, cytoplasmic (413 aa).

L-aspartate is bound by residues Gly39, Trp141, and Asn195. The residue at position 259 (Lys259) is an N6-(pyridoxal phosphate)lysine. L-aspartate is bound at residue Arg387.

The protein belongs to the class-I pyridoxal-phosphate-dependent aminotransferase family. Homodimer. The cofactor is pyridoxal 5'-phosphate.

The protein localises to the cytoplasm. It carries out the reaction L-aspartate + 2-oxoglutarate = oxaloacetate + L-glutamate. It catalyses the reaction L-cysteine + 2-oxoglutarate = 2-oxo-3-sulfanylpropanoate + L-glutamate. The enzyme catalyses (2S)-2-aminobutanoate + 2-oxoglutarate = 2-oxobutanoate + L-glutamate. The catalysed reaction is 3-sulfino-L-alanine + 2-oxoglutarate = 3-sulfinopyruvate + L-glutamate. In terms of biological role, biosynthesis of L-glutamate from L-aspartate or L-cysteine. Important regulator of levels of glutamate, the major excitatory neurotransmitter of the vertebrate central nervous system. Acts as a scavenger of glutamate in brain neuroprotection. The aspartate aminotransferase activity is involved in hepatic glucose synthesis during development and in adipocyte glyceroneogenesis. Using L-cysteine as substrate, regulates levels of mercaptopyruvate, an important source of hydrogen sulfide. Mercaptopyruvate is converted into H(2)S via the action of 3-mercaptopyruvate sulfurtransferase (3MST). Hydrogen sulfide is an important synaptic modulator and neuroprotectant in the brain. In Sus scrofa (Pig), this protein is Aspartate aminotransferase, cytoplasmic.